The chain runs to 61 residues: Small ribosomal subunit protein uS14 (61 aa).

Positions 24, 27, 40, and 43 each coordinate Zn(2+).

This sequence belongs to the universal ribosomal protein uS14 family. Zinc-binding uS14 subfamily. As to quaternary structure, part of the 30S ribosomal subunit. Contacts proteins S3 and S10. Zn(2+) serves as cofactor.

Binds 16S rRNA, required for the assembly of 30S particles and may also be responsible for determining the conformation of the 16S rRNA at the A site. This is Small ribosomal subunit protein uS14 from Streptococcus equi subsp. zooepidemicus (strain H70).